The chain runs to 132 residues: Small ribosomal subunit protein uS8 (132 aa).

It belongs to the universal ribosomal protein uS8 family. As to quaternary structure, part of the 30S ribosomal subunit. Contacts proteins S5 and S12.

One of the primary rRNA binding proteins, it binds directly to 16S rRNA central domain where it helps coordinate assembly of the platform of the 30S subunit. This chain is Small ribosomal subunit protein uS8, found in Geobacter sp. (strain M21).